The primary structure comprises 356 residues: Thrombomodulin (356 aa).

Residues 1–296 (RGARGETEGR…SPAPAGPLHS (296 aa)) are Extracellular-facing. EGF-like domains follow at residues 17 to 57 (GAWA…RSCG) and 60 to 98 (AEHPCHQLCEHFCHLHGLGNYTCICEAGYQLAADQHRCE). Intrachain disulfides connect cysteine 21/cysteine 32, cysteine 28/cysteine 41, cysteine 43/cysteine 56, cysteine 64/cysteine 72, cysteine 68/cysteine 82, cysteine 84/cysteine 97, cysteine 103/cysteine 114, cysteine 110/cysteine 123, cysteine 125/cysteine 136, cysteine 143/cysteine 152, cysteine 148/cysteine 162, cysteine 164/cysteine 178, cysteine 182/cysteine 191, cysteine 187/cysteine 199, cysteine 201/cysteine 213, cysteine 219/cysteine 228, cysteine 224/cysteine 237, and cysteine 239/cysteine 253. Residues 99-137 (DVDDCAQLPSPCPQRCVNTEGGFQCHCDTGYELVDGECV) form the EGF-like 3; calcium-binding domain. 2 consecutive EGF-like domains span residues 139–179 (PVDP…HKCQ) and 178–214 (CQMFCNQTSCPADCDPHYPTICRCPEGYIIDEGSTCT). Residues 215 to 254 (DINECDTNICPGQCHNLPGTYECICGPDSALSGQIGIDCD) enclose the EGF-like 6; calcium-binding domain. The tract at residues 255-290 (PTQVNEERGTPEDYGGSGEPPVSPTPGATARPSPAP) is disordered. Serine 271 carries O-linked (Xyl...) (chondroitin sulfate) serine glycosylation. Residues 297-320 (GVLVGISIASLSLVVALLALLCHL) form a helical membrane-spanning segment. At 321–356 (RKKQGASRGELEYKCGVPAKELMLQQVKTERTPQKL) the chain is on the cytoplasmic side.

In terms of assembly, interacts with ITGAL, ITGAM and ITGB2. Interacts with thrombin/F2; this interaction switches the specificity of thrombin from a procoagulant to an anticoagulant and antifibrinolytic protease. Interacts with ANGP1 and ANGP2; these interactions significantly inhibit the generation of activated PC and TAFIa/CPB2 by the thrombin/thrombomodulin complex. Interacts with PF4; this interaction enhances generation of activated protein C. Interacts with HMGB1; this interaction inhibits HMGB1 inflammatory activity. As to expression, endothelial cells are unique in synthesizing thrombomodulin.

It localises to the membrane. Functionally, endothelial cell receptor that plays a critical role in regulating several physiological processes including hemostasis, coagulation, fibrinolysis, inflammation, and angiogenesis. Acts as a cofactor for thrombin activation of protein C/PROC on the surface of vascular endothelial cells leading to initiation of the activated protein C anticoagulant pathway. Also accelerates the activation of the plasma carboxypeptidase B2/CPB2, which catalyzes removal of C-terminal basic amino acids from its substrates including kinins or anaphylatoxins leading to fibrinolysis inhibition. Plays critical protective roles in changing the cleavage specificity of protease-activated receptor 1/PAR1, inhibiting endothelial cell permeability and inflammation. Suppresses inflammation distinctly from its anticoagulant cofactor activity by sequestering HMGB1 thereby preventing it from engaging cellular receptors such as RAGE and contributing to the inflammatory response. This chain is Thrombomodulin (THBD), found in Bos taurus (Bovine).